Reading from the N-terminus, the 145-residue chain is NADH dehydrogenase [ubiquinone] 1 alpha subcomplex subunit 12 (145 aa).

The residue at position 1 (Met-1) is an N-acetylmethionine.

It belongs to the complex I NDUFA12 subunit family. Complex I is composed of 45 different subunits.

The protein localises to the mitochondrion inner membrane. Accessory subunit of the mitochondrial membrane respiratory chain NADH dehydrogenase (Complex I), that is believed not to be involved in catalysis. Complex I functions in the transfer of electrons from NADH to the respiratory chain. The immediate electron acceptor for the enzyme is believed to be ubiquinone. The polypeptide is NADH dehydrogenase [ubiquinone] 1 alpha subcomplex subunit 12 (NDUFA12) (Gorilla gorilla gorilla (Western lowland gorilla)).